We begin with the raw amino-acid sequence, 570 residues long: RNA polymerase I termination factor (570 aa).

A compositionally biased stretch (polar residues) spans 1-16; that stretch reads MDSVSNLKSTNFQNNN. Disordered regions lie at residues 1–21, 37–68, and 100–138; these read MDSVSNLKSTNFQNNNDPKES, HIKKTKKKLKKQKKRKHGSKMSHEDEDTDMDW, and SSMREKDKRSCHKKSSNSRSERKKHRKRKSSKERKAKIK. The segment covering 37 to 56 has biased composition (basic residues); the sequence is HIKKTKKKLKKQKKRKHGSK. Thr-64 carries the phosphothreonine modification. Over residues 108–137 the composition is skewed to basic residues; it reads RSCHKKSSNSRSERKKHRKRKSSKERKAKI. Residues 273–339 form the Myb-like 1 domain; sequence KFTPSEENAL…SIYKHIRRKY (67 aa). Residues 340–391 enclose the HTH myb-type domain; sequence HIFEQRGKWTPEEDQELARLCLEKEGHWTEVGKLLGRMPEDCRDRWRNYMKC. The segment at residues 367 to 389 is a DNA-binding region (H-T-H motif); it reads WTEVGKLLGRMPEDCRDRWRNYM. Myb-like domains are found at residues 392–486 and 493–549; these read GSKR…NKLV and SMLS…MREK.

In terms of assembly, interacts with FOB1. Interacts with the RENT complex subunits NET1 and SIR2.

The protein localises to the nucleus. Its subcellular location is the nucleolus. Functionally, DNA-binding protein that recognizes sequence-specific replication termini (Ter sites) within rDNA. Binds to rDNA terminator elements and mediates efficient RNA polymerase I transcription termination. Required for rDNA silencing at the non-transcribed spacer 1 (NTS1). Promotes the association of SIR2 with NTS1 and contributes to maintenance of rDNA stability. The protein is RNA polymerase I termination factor of Saccharomyces cerevisiae (strain ATCC 204508 / S288c) (Baker's yeast).